The chain runs to 279 residues: 2-dehydro-3-deoxyphosphooctonate aldolase (279 aa).

The protein belongs to the KdsA family.

It localises to the cytoplasm. The enzyme catalyses D-arabinose 5-phosphate + phosphoenolpyruvate + H2O = 3-deoxy-alpha-D-manno-2-octulosonate-8-phosphate + phosphate. It participates in carbohydrate biosynthesis; 3-deoxy-D-manno-octulosonate biosynthesis; 3-deoxy-D-manno-octulosonate from D-ribulose 5-phosphate: step 2/3. The protein operates within bacterial outer membrane biogenesis; lipopolysaccharide biosynthesis. The chain is 2-dehydro-3-deoxyphosphooctonate aldolase from Desulfosudis oleivorans (strain DSM 6200 / JCM 39069 / Hxd3) (Desulfococcus oleovorans).